Here is an 813-residue protein sequence, read N- to C-terminus: Fibroblast growth factor receptor 2 (813 aa).

An N-terminal signal peptide occupies residues 1–14 (MLLLALLAFLLVSR). At 18–367 (RPSYSMVDDT…EDNPVPYYME (350 aa)) the chain is on the extracellular side. The region spanning 21–117 (YSMVDDTTPE…NSHFFHVNVT (97 aa)) is the Ig-like C2-type 1 domain. Cys58 and Cys103 are joined by a disulfide. Asn79 and Asn115 each carry an N-linked (GlcNAc...) asparagine glycan. The tract at residues 119–143 (ASSSGDDEDDNDGSEDFTNDNNNIR) is disordered. Positions 123 to 136 (GDDEDDNDGSEDFT) are enriched in acidic residues. 2 Ig-like C2-type domains span residues 145 to 237 (PYWT…YHLD) and 246 to 348 (PILQ…AWLT). The interval 152 to 169 (KMEKKLHAVSAANTVKLR) is heparin-binding. Cysteines 170 and 221 form a disulfide. N-linked (GlcNAc...) asparagine glycosylation is found at Asn231, Asn255, Asn287, Asn308, and Asn321. An intrachain disulfide couples Cys268 to Cys332. A helical membrane pass occupies residues 368 to 388 (IGIYSTGIFIIFCMVVVCVVC). The Cytoplasmic portion of the chain corresponds to 389-813 (RMRQGAKKKK…FQHVNGVVKT (425 aa)). Phosphotyrosine; by autocatalysis is present on Tyr456. In terms of domain architecture, Protein kinase spans 471-760 (LTLGKPLGEG…LTLTTNEEYL (290 aa)). ATP contacts are provided by residues 477-485 (LGEGCFGQV), Lys507, 555-557 (EYA), and Asn561. Tyr576 is subject to Phosphotyrosine; by autocatalysis. Asp616 acts as the Proton acceptor in catalysis. A phosphotyrosine; by autocatalysis mark is found at Tyr646, Tyr647, and Tyr759. Low complexity predominate over residues 771–792 (PSFPDSSCSASSSSGDDSVFSP). The tract at residues 771–801 (PSFPDSSCSASSSSGDDSVFSPDPMPHDPCL) is disordered.

This sequence belongs to the protein kinase superfamily. Tyr protein kinase family. Fibroblast growth factor receptor subfamily. As to quaternary structure, monomer. Homodimer after ligand binding. Autophosphorylated. Binding of FGF family members together with heparan sulfate proteoglycan or heparin promotes receptor dimerization and autophosphorylation on tyrosine residues. Autophosphorylation occurs in trans between the two FGFR molecules present in the dimer. Post-translationally, N-glycosylated in the endoplasmic reticulum. The N-glycan chains undergo further maturation to an Endo H-resistant form in the Golgi apparatus. In terms of processing, ubiquitinated. FGFR2 is rapidly ubiquitinated after autophosphorylation, leading to internalization and degradation. Subject to degradation both in lysosomes and by the proteasome. In terms of tissue distribution, expressed in the anterior neural plate in early neurula stage embryos. Later in development, the protein is also expressed in the eye anlagen, midbrain-hindbrain boundary and otic vesicle.

It localises to the cell membrane. It is found in the golgi apparatus. Its subcellular location is the cytoplasmic vesicle. The enzyme catalyses L-tyrosyl-[protein] + ATP = O-phospho-L-tyrosyl-[protein] + ADP + H(+). Its activity is regulated as follows. Present in an inactive conformation in the absence of bound ligand. Ligand binding leads to dimerization and activation by autophosphorylation on tyrosine residues. In terms of biological role, tyrosine-protein kinase that acts as a cell-surface receptor for fibroblast growth factors and plays an essential role in the regulation of cell proliferation, differentiation, migration and apoptosis, and in the regulation of embryonic development. Required for normal embryonic patterning, limb bud development, lung morphogenesis, osteogenesis and skin development. Plays an essential role in the regulation of osteoblast differentiation, proliferation and apoptosis, and is required for normal skeleton development. Promotes cell proliferation in keratinocytes and immature osteoblasts, but promotes apoptosis in differentiated osteoblasts. Phosphorylates PLCG1, FRS2 and PAK4. Ligand binding leads to the activation of several signaling cascades. Activation of PLCG1 leads to the production of the cellular signaling molecules diacylglycerol and inositol 1,4,5-trisphosphate. Phosphorylation of FRS2 triggers recruitment of GRB2, GAB1, PIK3R1 and SOS1, and mediates activation of RAS, MAPK1/ERK2, MAPK3/ERK1 and the MAP kinase signaling pathway, as well as of the AKT1 signaling pathway. FGFR2 signaling is down-regulated by ubiquitination, internalization and degradation. Mutations that lead to constitutive kinase activation or impair normal FGFR2 maturation, internalization and degradation lead to aberrant signaling. Over-expressed FGFR2 promotes activation of STAT1. This chain is Fibroblast growth factor receptor 2 (fgfr2), found in Xenopus laevis (African clawed frog).